A 385-amino-acid polypeptide reads, in one-letter code: Protein pelota homolog (385 aa).

Lys162 is covalently cross-linked (Glycyl lysine isopeptide (Lys-Gly) (interchain with G-Cter in SUMO2)). Phosphoserine occurs at positions 374, 380, 381, and 382.

Belongs to the eukaryotic release factor 1 family. Pelota subfamily. In terms of assembly, component of the Pelota-HBS1L complex, also named Dom34-Hbs1 complex, composed of PELO and HBS1L. Interacts with PINK1. Interacts with ABCE1. Interacts with CNOT4. The cofactor is a divalent metal cation.

It is found in the cytoplasm. Its function is as follows. Component of the Pelota-HBS1L complex, a complex that recognizes stalled ribosomes and triggers the No-Go Decay (NGD) pathway. In the Pelota-HBS1L complex, PELO recognizes ribosomes stalled at the 3' end of an mRNA and engages stalled ribosomes by destabilizing mRNA in the mRNA channel. Following mRNA extraction from stalled ribosomes by the SKI complex, the Pelota-HBS1L complex promotes recruitment of ABCE1, which drives the disassembly of stalled ribosomes, followed by degradation of damaged mRNAs as part of the NGD pathway. As part of the PINK1-regulated signaling, upon mitochondrial damage is recruited to the ribosome/mRNA-ribonucleoprotein complex associated to mitochondrial outer membrane thereby enabling the recruitment of autophagy receptors and induction of mitophagy. This is Protein pelota homolog (PELO) from Pongo abelii (Sumatran orangutan).